We begin with the raw amino-acid sequence, 100 residues long: Large ribosomal subunit protein uL23 (100 aa).

It belongs to the universal ribosomal protein uL23 family. As to quaternary structure, part of the 50S ribosomal subunit. Contacts protein L29, and trigger factor when it is bound to the ribosome.

Functionally, one of the early assembly proteins it binds 23S rRNA. One of the proteins that surrounds the polypeptide exit tunnel on the outside of the ribosome. Forms the main docking site for trigger factor binding to the ribosome. The sequence is that of Large ribosomal subunit protein uL23 from Sodalis glossinidius (strain morsitans).